The sequence spans 427 residues: Phosphatase PSR1 (427 aa).

2 S-palmitoyl cysteine lipidation sites follow: C9 and C10. The span at 14–34 (TTQSNSNSAYRQQQSSSLNKN) shows a compositional bias: polar residues. The tract at residues 14–223 (TTQSNSNSAY…SNDADDEDDE (210 aa)) is disordered. Residues 35–48 (RSVKHSNTKSRTRG) are compositionally biased toward basic residues. Polar residues predominate over residues 49–80 (VHQTNSPPSKTNSAATFSSTERSTGKSGISTN). The span at 104–118 (KVEKRISKDDLYEEK) shows a compositional bias: basic and acidic residues. S110 is subject to Phosphoserine. Over residues 119–130 (YEVDEDEEIDDE) the composition is skewed to acidic residues. Over residues 131–151 (DNRRSRGIVQEKGDAVKDTSR) the composition is skewed to basic and acidic residues. K154 is covalently cross-linked (Glycyl lysine isopeptide (Lys-Gly) (interchain with G-Cter in ubiquitin)). Over residues 155–183 (QQQQQQQQSQPQPQPQSQSQSQSQSQSQQ) the composition is skewed to low complexity. Residues 184–214 (RGPTVQVSSDHLIQDMNLSRVSSSSQASETS) show a composition bias toward polar residues. The 159-residue stretch at 253 to 411 (STKGKKCLIL…LDIIPLLEDL (159 aa)) folds into the FCP1 homology domain.

In terms of assembly, interacts with WHI2.

Its subcellular location is the cell membrane. Its function is as follows. Has phosphatase activity in vitro. Involved in the response to sodium and lithium ion stress (but not to potassium or sorbitol stress) by inducing transcription of the sodium pump ENA1/PMR2. Acts through a calcineurin-independent pathway and is functionally redundant with PSR2. Also involved in the general stress response; acts together with WHI2 to activate stress response element (STRE)-mediated gene expression, possibly through dephosphorylation of MSN2. The protein is Phosphatase PSR1 (PSR1) of Saccharomyces cerevisiae (strain ATCC 204508 / S288c) (Baker's yeast).